Consider the following 32-residue polypeptide: Jingzhaotoxin F4-32.60 (32 aa).

3 cysteine pairs are disulfide-bonded: Cys2–Cys17, Cys9–Cys22, and Cys16–Cys29. Asp31 carries the aspartic acid 1-amide modification.

This sequence belongs to the neurotoxin 10 (Hwtx-1) family. 30 (Jztx-14) subfamily. Post-translationally, amidated as well as non-amidated forms are found in the venom. Expressed by the venom gland.

It is found in the secreted. Probable ion channel inhibitor. The polypeptide is Jingzhaotoxin F4-32.60 (Chilobrachys guangxiensis (Chinese earth tiger tarantula)).